Reading from the N-terminus, the 508-residue chain is MGSANNEYEFLSEIGLTSHNLGSYVAGKWQANGPLVSTLNPANNQPIAQVVEASLEDYEQGLKACEEAAKIWMQVTAPKRGDIVRQIGDALRSKLDYLGRLLSLEMGKILAEGIGEVQEVIDMCDFAVGLSRQLNGSVIPSERPNHMMLEMWNPLGIVGVITAFNFPCAVLGWNACIALVCGNCVVWKGAPTTPLITIAMTKLVAEVLEKNNLPGAIFTAMCGGAEIGEAIAKDTRIPLVSFTGSSRVGSMVQQTVNARSGKTLLELSGNNAIIVMDDADIQLAARSVLFAAVGTAGQRCTTCRRLLLHESVYDKVLEQLLTSYKQVKIGNPLEKGTLLGPLHTPESKKNFEKGIEVIKSQGGKILTGGKAVEGEGNFVEPTIIEISADAAVVKEELFAPVLYVLKFKSFGEAVAINNSVPQGLSSSIFTRNPENIFRWIGPLGSDCGIVNVNIPTNGAEIGGAFGGEKATGGGREAGSDSWKQYMRRSTCTINYGNELPLAQGINFG.

Position 244–249 (244–249 (GSSRVG)) interacts with NAD(+). Glu266 (proton acceptor) is an active-site residue. Residue Cys300 is the Nucleophile of the active site.

The protein belongs to the aldehyde dehydrogenase family. As to quaternary structure, homotetramer.

The catalysed reaction is an aldehyde + NAD(+) + H2O = a carboxylate + NADH + 2 H(+). The chain is Aldehyde dehydrogenase family 7 member B4 (ALDH7B4) from Arabidopsis thaliana (Mouse-ear cress).